A 325-amino-acid chain; its full sequence is Diacylglycerol acyltransferase/mycolyltransferase Ag85B (325 aa).

An N-terminal signal peptide occupies residues 1–40 (MTDVSRKIRAWGRRLMIGTAAAVVLPGLVGLAGGAATAGA). 82-83 (LR) contributes to the substrate binding site. A fibronectin-binding region spans residues 98 to 108 (FEWYYQSGLSI). An intrachain disulfide couples Cys-127 to Cys-132. Residues Ser-166 and Asp-194 each coordinate substrate. Ser-166 acts as the Nucleophile in catalysis. Glu-270 is an active-site residue. Substrate-binding positions include 272–275 (FVRS), Lys-279, and 302–304 (HSW). His-302 is an active-site residue.

This sequence belongs to the mycobacterial A85 antigen family.

It is found in the secreted. The enzyme catalyses 2 alpha,alpha'-trehalose 6-mycolate = alpha,alpha'-trehalose 6,6'-bismycolate + alpha,alpha-trehalose. It catalyses the reaction an acyl-CoA + a 1,2-diacyl-sn-glycerol = a triacyl-sn-glycerol + CoA. Functionally, the antigen 85 proteins (FbpA, FbpB, FbpC) are responsible for the high affinity of mycobacteria for fibronectin, a large adhesive glycoprotein, which facilitates the attachment of Mycobacteria to murine alveolar macrophages (AMs). They also help to maintain the integrity of the cell wall by catalyzing the transfer of mycolic acids to cell wall arabinogalactan and through the synthesis of alpha,alpha-trehalose dimycolate (TDM, cord factor). They catalyze the transfer of a mycoloyl residue from one molecule of alpha,alpha-trehalose monomycolate (TMM) to another TMM, leading to the formation of TDM. The protein is Diacylglycerol acyltransferase/mycolyltransferase Ag85B (fbpB) of Mycobacterium bovis (strain BCG / Pasteur 1173P2).